Reading from the N-terminus, the 238-residue chain is Beta-glucanase (238 aa).

The N-terminal stretch at Met1–Ala26 is a signal peptide. In terms of domain architecture, GH16 spans Val29–Asn238. A disulfide bridge connects residues Cys56 and Cys85. Glu129 functions as the Nucleophile in the catalytic mechanism. Glu133 (proton donor) is an active-site residue.

Belongs to the glycosyl hydrolase 16 family.

The enzyme catalyses Hydrolysis of (1-&gt;4)-beta-D-glucosidic linkages in beta-D-glucans containing (1-&gt;3)- and (1-&gt;4)-bonds.. The polypeptide is Beta-glucanase (gluB) (Paenibacillus polymyxa (Bacillus polymyxa)).